Consider the following 400-residue polypeptide: 3-hydroxykynurenine transaminase (400 aa).

The segment at 43 to 44 (SN) is binds to and confers specificity for 3-hydroxykynurenine; shared with dimeric partner. Residues 77–79 (SAH), Ser154, and Gln204 each bind pyridoxal 5'-phosphate. Ser154 serves as a coordination point for substrate. Lys205 is subject to N6-(pyridoxal phosphate)lysine. Residues Tyr256 and Thr259 each contribute to the pyridoxal 5'-phosphate site. Arg356 is a binding site for substrate.

It belongs to the class-V pyridoxal-phosphate-dependent aminotransferase family. As to quaternary structure, homodimer. May form homotetramer. It depends on pyridoxal 5'-phosphate as a cofactor.

Its subcellular location is the peroxisome. The catalysed reaction is glyoxylate + L-alanine = glycine + pyruvate. It catalyses the reaction L-kynurenine + glyoxylate = kynurenate + glycine + H2O. It carries out the reaction 3-hydroxy-L-kynurenine + glyoxylate = xanthurenate + glycine + H2O. The enzyme catalyses 3-hydroxy-L-kynurenine + pyruvate = xanthurenate + L-alanine + H2O. The catalysed reaction is L-kynurenine + pyruvate = kynurenate + L-alanine + H2O. It catalyses the reaction 2-oxobutanoate + L-alanine = (2S)-2-aminobutanoate + pyruvate. It carries out the reaction L-phenylalanine + pyruvate = 3-phenylpyruvate + L-alanine. The enzyme catalyses L-serine + pyruvate = 3-hydroxypyruvate + L-alanine. The catalysed reaction is L-cysteine + pyruvate = 2-oxo-3-sulfanylpropanoate + L-alanine. It catalyses the reaction 3-hydroxy-L-kynurenine + oxaloacetate = 4-(2-amino-3-hydroxyphenyl)-2,4-dioxobutanoate + L-aspartate. It carries out the reaction 3-hydroxy-L-kynurenine + 3-phenylpyruvate = 4-(2-amino-3-hydroxyphenyl)-2,4-dioxobutanoate + L-phenylalanine. The enzyme catalyses L-kynurenine + oxaloacetate = 4-(2-aminophenyl)-2,4-dioxobutanoate + L-aspartate. The catalysed reaction is 3-phenylpyruvate + L-kynurenine = 4-(2-aminophenyl)-2,4-dioxobutanoate + L-phenylalanine. Its pathway is amino-acid degradation; L-kynurenine degradation; kynurenate from L-kynurenine: step 1/2. Catalyzes the pyridoxal 5'-phosphate-dependent transamination of both 3-hydroxykynurenine and L-kynurenine to xanthurenic acid and kynurenic acid, respectively, preferentially using the alpha-ketoacid pyruvate, glyoxylate or oxaloacetate as the amino group acceptor. The affinity and catalytic efficiency for 3-hydroxykynurenine is higher than for L-kynurenine. Involved in the detoxification of cytotoxic metabolite 3-hydroxykynurenine generated by the hydroxylation of L-kynurenine, an intermediate in the tryptophan catabolism pathway. Also catalyzes, although with a lesser efficiency, the transamination of alanine with glyoxylate as an amino group acceptor. May play a role in the detoxification of glyoxylate, a toxic plant metabolite from the diet. The sequence is that of 3-hydroxykynurenine transaminase from Aedes aegypti (Yellowfever mosquito).